The primary structure comprises 60 residues: Large ribosomal subunit protein uL30 (60 aa).

This sequence belongs to the universal ribosomal protein uL30 family. Part of the 50S ribosomal subunit.

The polypeptide is Large ribosomal subunit protein uL30 (Desulforapulum autotrophicum (strain ATCC 43914 / DSM 3382 / VKM B-1955 / HRM2) (Desulfobacterium autotrophicum)).